The sequence spans 246 residues: Sensory transduction protein LytT (246 aa).

The Response regulatory domain occupies 3 to 117; that stretch reads KVLVVDDEML…RIVQTLKKYK (115 aa). The HTH LytTR-type domain maps to 142-246; the sequence is LALPIEESIV…AKELKKLLRI (105 aa).

Phosphorylated by LytS.

Its subcellular location is the cytoplasm. Functionally, member of the two-component regulatory system LytS/LytT that probably regulates genes involved in cell wall metabolism. The sequence is that of Sensory transduction protein LytT (lytT) from Bacillus cereus (strain ATCC 14579 / DSM 31 / CCUG 7414 / JCM 2152 / NBRC 15305 / NCIMB 9373 / NCTC 2599 / NRRL B-3711).